The following is a 430-amino-acid chain: NAD(P)(+) glycohydrolase toxin Tse6 (430 aa).

3 consecutive transmembrane segments (helical) span residues 17–37 (FGVAAMVAGAVAGALIGAAVV), 46–66 (LAAVILAGSIAAGGLSMFQIV), and 193–213 (LLLAAMAGVAALVGVVAIGGL).

In terms of assembly, interacts with Tsi6, VgrG1a, EagT6 and EF-Tu.

The protein resides in the membrane. The enzyme catalyses NAD(+) + H2O = ADP-D-ribose + nicotinamide + H(+). In terms of biological role, type VI secretion exported toxin that acts as a glycohydrolase on bacterial target cells and degrades the essential dinucleotides NAD(+) and NADP(+), thereby inducing bacteriostasis. The activity resides in the C-terminal region that is initially neutralized by the cognate immunity protein Tsi6. This chain is NAD(P)(+) glycohydrolase toxin Tse6, found in Pseudomonas aeruginosa (strain ATCC 15692 / DSM 22644 / CIP 104116 / JCM 14847 / LMG 12228 / 1C / PRS 101 / PAO1).